Consider the following 609-residue polypeptide: Proteasome-associated ATPase (609 aa).

Positions 1-22 (MGESERSEAFNPPREAGMSSGD) are disordered. Positions 20 to 96 (SGDIAELEQL…LREEVDRLGQ (77 aa)) form a coiled coil. 296-301 (GCGKTL) provides a ligand contact to ATP. The tract at residues 608 to 609 (YL) is docks into pockets in the proteasome alpha-ring.

This sequence belongs to the AAA ATPase family. Homohexamer. Assembles into a hexameric ring structure that caps the 20S proteasome core. Strongly interacts with the prokaryotic ubiquitin-like protein Pup through a hydrophobic interface; the interacting region of ARC lies in its N-terminal coiled-coil domain. There is one Pup binding site per ARC hexamer ring. Upon ATP-binding, the C-terminus of ARC interacts with the alpha-rings of the proteasome core, possibly by binding to the intersubunit pockets.

The protein operates within protein degradation; proteasomal Pup-dependent pathway. In terms of biological role, ATPase which is responsible for recognizing, binding, unfolding and translocation of pupylated proteins into the bacterial 20S proteasome core particle. May be essential for opening the gate of the 20S proteasome via an interaction with its C-terminus, thereby allowing substrate entry and access to the site of proteolysis. Thus, the C-termini of the proteasomal ATPase may function like a 'key in a lock' to induce gate opening and therefore regulate proteolysis. The sequence is that of Proteasome-associated ATPase from Mycobacterium leprae (strain Br4923).